We begin with the raw amino-acid sequence, 198 residues long: Ribonuclease HII (198 aa).

Residues 10-198 (HLVAGVDEVG…PVKRALELAS (189 aa)) enclose the RNase H type-2 domain. A divalent metal cation is bound by residues D16, E17, and D108.

The protein belongs to the RNase HII family. Mn(2+) serves as cofactor. It depends on Mg(2+) as a cofactor.

Its subcellular location is the cytoplasm. The catalysed reaction is Endonucleolytic cleavage to 5'-phosphomonoester.. Endonuclease that specifically degrades the RNA of RNA-DNA hybrids. In Salmonella arizonae (strain ATCC BAA-731 / CDC346-86 / RSK2980), this protein is Ribonuclease HII.